The chain runs to 504 residues: MTLGIFRRVFLMLSVALGLTKGDLVKPSRGQLVNCTCENPHCKRPICQGAWCTVVLVREQGRHPQVYRGCGSLNQELCLGRPTEFVNHHCCYRSFCNHNVSLMLEATQTPSEEPEVDAHLPLILGPVLALLVLVALGTLGLWRVRRRQEKQRGLHSDLGESSLILKASEQGDSMLGDFLVSDCTTGSGSGLPFLVQRTVARQVALVECVGKGRYGEVWRGSWHGESVAVKIFSSRDEQSWFRETEIYNTVLLRHDNILGFIASDMTSRNSSTQLWLITHYHEHGSLYDFLQRQTLEPQLALRLAVSAACGLAHLHVEIFGTQGKPAIAHRDLKSRNVLVKSNLQCCIADLGLAVMHSQSSDYLDIGNNPRVGTKRYMAPEVLDEQIRTDCFESYKWTDIWAFGLVLWEIARRTIINGIVEDYRPPFYDMVPNDPSFEDMKKVVCVDQQTPTIPNRLAADPVLSGLAQMMRECWYPNPSARLTALRIKKTLQKLSQNPEKPKVIH.

An N-terminal signal peptide occupies residues Met1–Thr20. The Extracellular portion of the chain corresponds to Lys21–Pro121. Asn34 carries N-linked (GlcNAc...) asparagine glycosylation. 3 disulfide bridges follow: Cys35/Cys52, Cys37/Cys42, and Cys47/Cys70. A mediates specificity for BMP ligand region spans residues Asn74–Leu77. 2 cysteine pairs are disulfide-bonded: Cys78/Cys90 and Cys91/Cys96. N-linked (GlcNAc...) asparagine glycosylation is present at Asn99. A helical transmembrane segment spans residues Leu122–Trp142. At Arg143–His504 the chain is on the cytoplasmic side. Residues Ser156, Ser161, and Ser162 each carry the phosphoserine modification. The region spanning Ser173 to Gln202 is the GS domain. In terms of domain architecture, Protein kinase spans Val203–His504. Residues Val209 to Val217 and Lys230 contribute to the ATP site. Asp331 serves as the catalytic Proton acceptor.

Belongs to the protein kinase superfamily. TKL Ser/Thr protein kinase family. TGFB receptor subfamily. In terms of assembly, interacts with TSC22D1/TSC-22. It depends on Mg(2+) as a cofactor. Mn(2+) is required as a cofactor. Urogenital ridge, testis, ovary, brain and lung. In lung, found exclusively in pulmonary vessels of all sizes. Also expressed in aorta, vena cava and certain blood vessels of kidney, spleen, heart and intestine. For most blood vessels, a higher level of expression is found in endothelium than in adjacent smooth muscle.

Its subcellular location is the cell membrane. The enzyme catalyses L-threonyl-[receptor-protein] + ATP = O-phospho-L-threonyl-[receptor-protein] + ADP + H(+). It carries out the reaction L-seryl-[receptor-protein] + ATP = O-phospho-L-seryl-[receptor-protein] + ADP + H(+). Functionally, type I receptor for TGF-beta family ligands BMP9/GDF2 and BMP10 and important regulator of normal blood vessel development. On ligand binding, forms a receptor complex consisting of two type II and two type I transmembrane serine/threonine kinases. Type II receptors phosphorylate and activate type I receptors which autophosphorylate, then bind and activate SMAD transcriptional regulators. May bind activin as well. This is Activin receptor type-1-like (Acvrl1) from Rattus norvegicus (Rat).